A 1397-amino-acid chain; its full sequence is Ankyrin repeat domain-containing protein 30A (1397 aa).

ANK repeat units follow at residues glutamine 72–valine 101, glutamate 105–leucine 134, tyrosine 138–valine 167, alanine 171–alanine 200, tyrosine 204–alanine 233, and cysteine 237–threonine 271. Residues asparagine 267–glycine 279 show a composition bias toward polar residues. Disordered stretches follow at residues asparagine 267–alanine 376, proline 453–cysteine 482, glutamine 782–glutamate 807, and threonine 902–threonine 931. Basic and acidic residues-rich tracts occupy residues arginine 290–aspartate 304 and arginine 312–aspartate 326. Over residues lysine 455–arginine 467 the composition is skewed to polar residues. Basic and acidic residues-rich tracts occupy residues glutamine 782–glutamate 800 and serine 913–threonine 931. 2 coiled-coil regions span residues valine 998–lysine 1188 and glutamate 1282–glutamine 1327.

Mainly expressed in breast and testis. A very faint signal is detected in placenta. Also expressed in many breast cancer cells.

The protein is Ankyrin repeat domain-containing protein 30A (ANKRD30A) of Homo sapiens (Human).